The following is a 660-amino-acid chain: Threonine--tRNA ligase (660 aa).

Residues 1 to 64 (MSHSVSLTFP…TEGRIEIVTR (64 aa)) enclose the TGS domain. Residues 245–547 (DHRRLGREMD…LLENFAGHMP (303 aa)) are catalytic. Zn(2+)-binding residues include Cys341, His392, and His524.

Belongs to the class-II aminoacyl-tRNA synthetase family. In terms of assembly, homodimer. Zn(2+) is required as a cofactor.

The protein localises to the cytoplasm. The enzyme catalyses tRNA(Thr) + L-threonine + ATP = L-threonyl-tRNA(Thr) + AMP + diphosphate + H(+). Functionally, catalyzes the attachment of threonine to tRNA(Thr) in a two-step reaction: L-threonine is first activated by ATP to form Thr-AMP and then transferred to the acceptor end of tRNA(Thr). Also edits incorrectly charged L-seryl-tRNA(Thr). The sequence is that of Threonine--tRNA ligase from Sinorhizobium medicae (strain WSM419) (Ensifer medicae).